A 157-amino-acid polypeptide reads, in one-letter code: Dihydrofolate reductase type 1 (157 aa).

A DHFR domain is found at 2–156 (KLSLMVAISK…INYSYQIWQK (155 aa)).

The protein belongs to the dihydrofolate reductase family. Homodimer.

It carries out the reaction (6S)-5,6,7,8-tetrahydrofolate + NADP(+) = 7,8-dihydrofolate + NADPH + H(+). The protein operates within cofactor biosynthesis; tetrahydrofolate biosynthesis; 5,6,7,8-tetrahydrofolate from 7,8-dihydrofolate: step 1/1. Functionally, key enzyme in folate metabolism. Catalyzes an essential reaction for de novo glycine and purine synthesis, and for DNA precursor synthesis. The protein is Dihydrofolate reductase type 1 (dhfrI) of Escherichia coli.